Reading from the N-terminus, the 279-residue chain is Lysozyme-like protein 2 (279 aa).

Residues 1–19 form the signal peptide; that stretch reads MIKLLVSFTILFVLSSARP. The Ch-type lysozyme domain maps to 47 to 265; it reads MGNAVDFSFP…AAAPKTEVNM (219 aa).

The protein belongs to the glycosyl hydrolase 25 family. In terms of tissue distribution, expressed in intestine.

In terms of biological role, involved in resistance to Gram-positive bacteria P.aeruginosa or B.thuringiensis infection. The protein is Lysozyme-like protein 2 of Caenorhabditis elegans.